The sequence spans 318 residues: MARKKIALVGAGNIGGTLAHLIGLKELGDVVLFDIAEGTPQGKALDIAESTPIEGVDASYSGSNDYAAIKDADVVIVTAGVPRKPGMSRDDLIGINAKVMSAVGQGIRANCPNAFVICITNPLDAMVWVLREVSGLPHNKVVGMAGVLDSARFRYFLSEEFNVSVKDVNAFVLGGHGDTMVPLPRYSTVAGIPLPDLVKMGWTTQEKLDQIIQRTRDGGAEIVGLLKTGSAFYAPAAAAVQMAEAYLKDQKRVLPCAAWVEGQYGLDGIYVGVPTIIGAGGIEKVIEIELNADEKAAFAKSVDSVRGLIAASKELMPK.

Residues 10 to 15 (GAGNIG) and aspartate 34 each bind NAD(+). The substrate site is built by arginine 83 and arginine 89. NAD(+) is bound by residues asparagine 96 and 119–121 (ITN). Residues asparagine 121 and arginine 152 each coordinate substrate. The Proton acceptor role is filled by histidine 176.

It belongs to the LDH/MDH superfamily. MDH type 3 family.

The catalysed reaction is (S)-malate + NAD(+) = oxaloacetate + NADH + H(+). Its function is as follows. Catalyzes the reversible oxidation of malate to oxaloacetate. The sequence is that of Malate dehydrogenase from Rhodospirillum rubrum (strain ATCC 11170 / ATH 1.1.1 / DSM 467 / LMG 4362 / NCIMB 8255 / S1).